The sequence spans 121 residues: Prefoldin subunit beta (121 aa).

This sequence belongs to the prefoldin subunit beta family. As to quaternary structure, heterohexamer of two alpha and four beta subunits.

It localises to the cytoplasm. Functionally, molecular chaperone capable of stabilizing a range of proteins. Seems to fulfill an ATP-independent, HSP70-like function in archaeal de novo protein folding. This Methanoculleus marisnigri (strain ATCC 35101 / DSM 1498 / JR1) protein is Prefoldin subunit beta.